A 124-amino-acid polypeptide reads, in one-letter code: Holo-[acyl-carrier-protein] synthase (124 aa).

2 residues coordinate Mg(2+): aspartate 8 and glutamate 58.

It belongs to the P-Pant transferase superfamily. AcpS family. Requires Mg(2+) as cofactor.

The protein localises to the cytoplasm. It catalyses the reaction apo-[ACP] + CoA = holo-[ACP] + adenosine 3',5'-bisphosphate + H(+). Transfers the 4'-phosphopantetheine moiety from coenzyme A to a Ser of acyl-carrier-protein. This Lacticaseibacillus casei (strain BL23) (Lactobacillus casei) protein is Holo-[acyl-carrier-protein] synthase.